The following is a 471-amino-acid chain: Bifunctional protein GlmU (471 aa).

The segment at 1 to 235 (MVAVAILAAG…YQEIFGINNR (235 aa)) is pyrophosphorylase. UDP-N-acetyl-alpha-D-glucosamine is bound by residues 7–10 (LAAG), K21, Q82, and 87–88 (GT). Position 112 (D112) interacts with Mg(2+). G149, E164, N179, and N233 together coordinate UDP-N-acetyl-alpha-D-glucosamine. Residue N233 participates in Mg(2+) binding. The tract at residues 236–256 (KHLAKAHEILQVRVKDDWMEA) is linker. Positions 257–471 (GVTLIDPDSI…SKKEENKSSP (215 aa)) are N-acetyltransferase. Residues R338 and K356 each contribute to the UDP-N-acetyl-alpha-D-glucosamine site. H368 serves as the catalytic Proton acceptor. Residues Y371 and N382 each contribute to the UDP-N-acetyl-alpha-D-glucosamine site. Residues A385, 391-392 (NY), S410, A428, and R445 contribute to the acetyl-CoA site.

In the N-terminal section; belongs to the N-acetylglucosamine-1-phosphate uridyltransferase family. The protein in the C-terminal section; belongs to the transferase hexapeptide repeat family. Homotrimer. The cofactor is Mg(2+).

The protein localises to the cytoplasm. It carries out the reaction alpha-D-glucosamine 1-phosphate + acetyl-CoA = N-acetyl-alpha-D-glucosamine 1-phosphate + CoA + H(+). It catalyses the reaction N-acetyl-alpha-D-glucosamine 1-phosphate + UTP + H(+) = UDP-N-acetyl-alpha-D-glucosamine + diphosphate. The protein operates within nucleotide-sugar biosynthesis; UDP-N-acetyl-alpha-D-glucosamine biosynthesis; N-acetyl-alpha-D-glucosamine 1-phosphate from alpha-D-glucosamine 6-phosphate (route II): step 2/2. It functions in the pathway nucleotide-sugar biosynthesis; UDP-N-acetyl-alpha-D-glucosamine biosynthesis; UDP-N-acetyl-alpha-D-glucosamine from N-acetyl-alpha-D-glucosamine 1-phosphate: step 1/1. Its pathway is bacterial outer membrane biogenesis; LPS lipid A biosynthesis. Catalyzes the last two sequential reactions in the de novo biosynthetic pathway for UDP-N-acetylglucosamine (UDP-GlcNAc). The C-terminal domain catalyzes the transfer of acetyl group from acetyl coenzyme A to glucosamine-1-phosphate (GlcN-1-P) to produce N-acetylglucosamine-1-phosphate (GlcNAc-1-P), which is converted into UDP-GlcNAc by the transfer of uridine 5-monophosphate (from uridine 5-triphosphate), a reaction catalyzed by the N-terminal domain. This is Bifunctional protein GlmU from Trichodesmium erythraeum (strain IMS101).